We begin with the raw amino-acid sequence, 465 residues long: 3-isopropylmalate dehydratase large subunit (465 aa).

C347, C407, and C410 together coordinate [4Fe-4S] cluster. Residues 416 to 443 (DTLRPGERSASTSNRNFEGRQGPGGRTH) form a disordered region.

Belongs to the aconitase/IPM isomerase family. LeuC type 1 subfamily. Heterodimer of LeuC and LeuD. [4Fe-4S] cluster is required as a cofactor.

It carries out the reaction (2R,3S)-3-isopropylmalate = (2S)-2-isopropylmalate. It participates in amino-acid biosynthesis; L-leucine biosynthesis; L-leucine from 3-methyl-2-oxobutanoate: step 2/4. Its function is as follows. Catalyzes the isomerization between 2-isopropylmalate and 3-isopropylmalate, via the formation of 2-isopropylmaleate. In Frankia casuarinae (strain DSM 45818 / CECT 9043 / HFP020203 / CcI3), this protein is 3-isopropylmalate dehydratase large subunit.